The sequence spans 150 residues: Small ribosomal subunit protein eS19 (150 aa).

Belongs to the eukaryotic ribosomal protein eS19 family. As to quaternary structure, part of the 30S ribosomal subunit.

Functionally, may be involved in maturation of the 30S ribosomal subunit. The sequence is that of Small ribosomal subunit protein eS19 from Thermoplasma volcanium (strain ATCC 51530 / DSM 4299 / JCM 9571 / NBRC 15438 / GSS1).